The sequence spans 551 residues: Probable 4-coumarate--CoA ligase 1 (551 aa).

6 residues coordinate ATP: Ser-205, Ser-206, Gly-207, Thr-208, Thr-209, and Lys-213. Residue Tyr-253 coordinates (E)-4-coumaroyl-AMP. Residue Lys-274 coordinates CoA. Positions Glu-276–Gln-346 are SBD1. The (E)-4-coumaroyl-AMP site is built by Ala-323, Gln-346, Gly-347, and Thr-351. Residues Gln-346, Gly-347, Thr-351, Asp-430, and Arg-445 each coordinate ATP. The interval Gly-347–Tyr-409 is SBD2. Residues Lys-447 and Lys-451 each coordinate (E)-4-coumaroyl-AMP. The CoA site is built by Lys-453 and Gly-454. Lys-537 contributes to the ATP binding site.

This sequence belongs to the ATP-dependent AMP-binding enzyme family. Requires Mg(2+) as cofactor.

The enzyme catalyses (E)-4-coumarate + ATP + CoA = (E)-4-coumaroyl-CoA + AMP + diphosphate. It carries out the reaction (E)-4-coumarate + ATP + H(+) = (E)-4-coumaroyl-AMP + diphosphate. It catalyses the reaction (E)-4-coumaroyl-AMP + CoA = (E)-4-coumaroyl-CoA + AMP + H(+). Its pathway is phytoalexin biosynthesis; 3,4',5-trihydroxystilbene biosynthesis; 3,4',5-trihydroxystilbene from trans-4-coumarate: step 1/2. Carboxylate--CoA ligase that may use 4-coumarate as substrate. Follows a two-step reaction mechanism, wherein the carboxylate substrate first undergoes adenylation by ATP, followed by a thioesterification in the presence of CoA to yield the final CoA thioester. This chain is Probable 4-coumarate--CoA ligase 1 (4cl1), found in Dictyostelium discoideum (Social amoeba).